A 53-amino-acid polypeptide reads, in one-letter code: Bowman-Birk type proteinase inhibitor II-4 (53 aa).

4 disulfides stabilise this stretch: cysteine 8-cysteine 23, cysteine 13-cysteine 21, cysteine 30-cysteine 37, and cysteine 34-cysteine 49.

It belongs to the Bowman-Birk serine protease inhibitor family.

The sequence is that of Bowman-Birk type proteinase inhibitor II-4 from Triticum aestivum (Wheat).